A 428-amino-acid chain; its full sequence is Elongation factor 1-alpha (428 aa).

The tr-type G domain occupies Lys5 to Lys215. Residues Gly14–Ser21 are G1. A GTP-binding site is contributed by Gly14–Ser21. Position 21 (Ser21) interacts with Mg(2+). The interval Gly68–Asp72 is G2. Residues Asp89–Gly92 are G3. GTP-binding positions include Asp89 to His93 and Asn144 to Asp147. Residues Asn144–Asp147 are G4. The tract at residues Ser181–Trp183 is G5.

This sequence belongs to the TRAFAC class translation factor GTPase superfamily. Classic translation factor GTPase family. EF-Tu/EF-1A subfamily.

Its subcellular location is the cytoplasm. The enzyme catalyses GTP + H2O = GDP + phosphate + H(+). Its function is as follows. GTP hydrolase that promotes the GTP-dependent binding of aminoacyl-tRNA to the A-site of ribosomes during protein biosynthesis. This Thermococcus gammatolerans (strain DSM 15229 / JCM 11827 / EJ3) protein is Elongation factor 1-alpha.